Here is a 198-residue protein sequence, read N- to C-terminus: DnaJ homolog subfamily C member 12 (198 aa).

Methionine 1 carries the post-translational modification N-acetylmethionine. The 66-residue stretch at 14-79 (DYYTLLGCDE…ESRARYDHWR (66 aa)) folds into the J domain. Positions 114–156 (EESDKTHTTKMENEECNEQRERKKEELASTAEKTEQKEPKPLE) are enriched in basic and acidic residues. Residues 114–169 (EESDKTHTTKMENEECNEQRERKKEELASTAEKTEQKEPKPLEKSVSPQNSDSSGF) are disordered. Phosphoserine is present on residues serine 160, serine 166, and serine 182.

As to quaternary structure, interacts with HSPA8. Interacts with TPH1. Interacts with TPH2. In terms of tissue distribution, expressed at high levels in brain, heart, and testis, and at reduced levels in kidney and stomach.

It is found in the cytoplasm. Functionally, probable co-chaperone that participates in the proper folding of biopterin-dependent aromatic amino acid hydroxylases, which include phenylalanine-4-hydroxylase (PAH), tyrosine 3-monooxygenase (TH) and peripheral and neuronal tryptophan hydroxylases (TPH1 and TPH2). The protein is DnaJ homolog subfamily C member 12 (DNAJC12) of Homo sapiens (Human).